The sequence spans 254 residues: 5-oxoprolinase subunit A (254 aa).

It belongs to the LamB/PxpA family. As to quaternary structure, forms a complex composed of PxpA, PxpB and PxpC.

It carries out the reaction 5-oxo-L-proline + ATP + 2 H2O = L-glutamate + ADP + phosphate + H(+). Functionally, catalyzes the cleavage of 5-oxoproline to form L-glutamate coupled to the hydrolysis of ATP to ADP and inorganic phosphate. The chain is 5-oxoprolinase subunit A from Burkholderia thailandensis (strain ATCC 700388 / DSM 13276 / CCUG 48851 / CIP 106301 / E264).